A 146-amino-acid polypeptide reads, in one-letter code: Anti-sigma F factor (146 aa).

This sequence belongs to the anti-sigma-factor family.

It carries out the reaction L-seryl-[protein] + ATP = O-phospho-L-seryl-[protein] + ADP + H(+). It catalyses the reaction L-threonyl-[protein] + ATP = O-phospho-L-threonyl-[protein] + ADP + H(+). Binds to sigma F and blocks its ability to form an RNA polymerase holoenzyme (E-sigma F). Phosphorylates SpoIIAA on a serine residue. This phosphorylation may enable SpoIIAA to act as an anti-anti-sigma factor that counteracts SpoIIAB and thus releases sigma F from inhibition. In Bacillus anthracis (strain A0248), this protein is Anti-sigma F factor.